A 167-amino-acid chain; its full sequence is UPF0598 protein CG30010 (167 aa).

This sequence belongs to the UPF0598 family.

In Drosophila melanogaster (Fruit fly), this protein is UPF0598 protein CG30010.